Reading from the N-terminus, the 588-residue chain is MSTLSDSDTETEVVSRNLCGIVDIGSNGIRFSISSKAAHHARIMPCVFKDRVGLSLYEVQYNTHTNAKCPIPRDIIKEVCSAMKRFKLICDDFGVPETSVRVIATEATRDAINADEFVNAVYGSTGWKVEILGQEDETRVGIYGVVSSFNTVRGLYLDVAGGSTQLSWVISSHGEVKQSSKPVSLPYGAGTLLRRMRTDDNRALFYEIKEAYKDAIEKIGIPQEMIDDAKKEGGFDLWTRGGGLRGMGHLLLYQSEGYPIQTIINGYACTYEEFSSMSDYLFLKQKIPGSSKEHKIFKVSDRRALQLPAVGLFMSAVFEAIPQIKAVHFSEGGVREGSLYSLLPKEIRAQDPLLIASRPYAPLLTEKYLYLLRTSIPQEDIPEIVNERIAPALCNLAFVHASYPKELQPTAALHVATRGIIAGCHGLSHRARALIGIALCSRWGGNIPESEEKYSQELEQVVLREGDKAEALRIVWWTKYIGTIMYVICGVHPGGNIRDNVFDFHVSKRSEVETSLKELIIDDANTTKVKEESTRKNRGYEVVVRISKDDLKTSASVRSRIITLQKKVRKLSRGSVERVKIGVQFYEE.

It belongs to the GppA/Ppx family.

Its function is as follows. Required for a novel path of interorganelle communication between mitochondria, peroxisomes and the nucleus, thereby maintaining a functional metabolic interaction between the tricarboxylic acid and glyoxylate cycles. In particular, required for the retrograde expression of the peroxisomal isoform of citrate synthase, CIT2. This Saccharomyces cerevisiae (strain ATCC 204508 / S288c) (Baker's yeast) protein is Retrograde regulation protein 2 (RTG2).